A 277-amino-acid polypeptide reads, in one-letter code: Coiled-coil domain-containing protein 117 (277 aa).

Residues S22 to K69 are disordered. Over residues P23–G55 the composition is skewed to low complexity. R47 is modified (omega-N-methylarginine). At S52 the chain carries Phosphoserine. The span at A58 to K69 shows a compositional bias: basic residues. Residues Q139–N166 adopt a coiled-coil conformation. 2 disordered regions span residues L216–T242 and Q255–L277. Polar residues predominate over residues N225–T242.

Interacts with CIAO2B; the interaction is direct. Interacts with MMS19; the interaction is indirect.

It localises to the cytoplasm. It is found in the cytoskeleton. Its subcellular location is the spindle. The protein resides in the nucleus. Its function is as follows. Facilitates DNA repair, cell cycle progression, and cell proliferation through its interaction with CIAO2B. In Rattus norvegicus (Rat), this protein is Coiled-coil domain-containing protein 117.